A 726-amino-acid polypeptide reads, in one-letter code: X-ray repair cross-complementing protein 5 (726 aa).

The 153-residue stretch at 8–160 (AVVLCMDVGL…ANLKKAEITL (153 aa)) folds into the VWFA domain. The interval 137 to 164 (LSSPFSVDQLEVIIANLKKAEITLQFFL) is leucine-zipper. Residues 175–186 (GSSNNRGNAGSS) show a composition bias toward low complexity. Residues 175–198 (GSSNNRGNAGSSDRGCGPGKGLSD) are disordered. Positions 253–449 (GSSLSIRIVG…NKKFTPTESQ (197 aa)) constitute a Ku domain. An EEXXXDL motif motif is present at residues 714–722 (EDEGDVDDL).

This sequence belongs to the ku80 family. As to quaternary structure, heterodimer composed of xrcc5/Ku80 and xrcc6/Ku70. In terms of processing, ubiquitinated via 'Lys-48'-linked polyubiquitination at DNA double strand break sites (DSBs), leading to its release from DSBs and subsequent proteasomal degradation. Polyubiquitination is not required for completion of NHEJ. In terms of tissue distribution, expressed at high levels in oocyte and testis.

It localises to the nucleus. Single-stranded DNA-dependent ATP-dependent helicase that plays a key role in DNA non-homologous end joining (NHEJ). The sequence is that of X-ray repair cross-complementing protein 5 from Xenopus laevis (African clawed frog).